The primary structure comprises 246 residues: Uridylate kinase (246 aa).

Lys-19–Gly-22 serves as a coordination point for ATP. Gly-61 contacts UMP. The ATP site is built by Gly-62 and Arg-66. Residues Asp-81 and Thr-142 to Thr-149 contribute to the UMP site. ATP contacts are provided by Thr-169, Gln-170, Tyr-175, and Asp-178.

It belongs to the UMP kinase family. In terms of assembly, homohexamer.

The protein localises to the cytoplasm. The catalysed reaction is UMP + ATP = UDP + ADP. It functions in the pathway pyrimidine metabolism; CTP biosynthesis via de novo pathway; UDP from UMP (UMPK route): step 1/1. Its activity is regulated as follows. Inhibited by UTP. Catalyzes the reversible phosphorylation of UMP to UDP. This chain is Uridylate kinase, found in Wolbachia sp. subsp. Brugia malayi (strain TRS).